The chain runs to 340 residues: Glutaminase 2 (340 aa).

The substrate site is built by S89, N140, N191, Y215, and Y267.

The protein belongs to the glutaminase family. Homotetramer.

The catalysed reaction is L-glutamine + H2O = L-glutamate + NH4(+). In Yersinia pestis, this protein is Glutaminase 2.